Here is an 804-residue protein sequence, read N- to C-terminus: G-type lectin S-receptor-like serine/threonine-protein kinase At1g61490 (804 aa).

The N-terminal stretch at 1 to 24 (MGKKRIVFFACLLLFTVLLRFSYA) is a signal peptide. The Bulb-type lectin domain maps to 25–144 (GITTESPLSV…ASGRTLWESF (120 aa)). Residues 25-425 (GITTESPLSV…SELGGNKRNK (401 aa)) are Extracellular-facing. Residues Asn-53, Asn-94, Asn-117, Asn-134, Asn-236, and Asn-267 are each glycosylated (N-linked (GlcNAc...) asparagine). In terms of domain architecture, EGF-like spans 278–314 (PANSCDIYGVCGPFGLCIVSVPLKCKCLKGFVPHSTE). 2 disulfide bridges follow: Cys-282–Cys-294 and Cys-288–Cys-302. Residues Asn-320, Asn-336, and Asn-375 are each glycosylated (N-linked (GlcNAc...) asparagine). In terms of domain architecture, PAN spans 333-415 (CQGNSTGKDV…GEILSIRLAH (83 aa)). Intrachain disulfides connect Cys-368–Cys-389 and Cys-372–Cys-378. Residues 426–446 (IIVASTVSLSLFVILTSAAFG) form a helical membrane-spanning segment. Residues 447-804 (FWRYRVKHKA…EMTQSMILGR (358 aa)) lie on the Cytoplasmic side of the membrane. The 286-residue stretch at 490–775 (FSLSNKLGQG…DLPSPKQPTF (286 aa)) folds into the Protein kinase domain. Residues 496–504 (LGQGGFGSV) and Lys-518 contribute to the ATP site. Residues Ser-524 and Ser-539 each carry the phosphoserine modification. The caM-binding stretch occupies residues 579–596 (RKKLEVDWPKRFDIVQGI). Asp-615 (proton acceptor) is an active-site residue. A phosphoserine mark is found at Ser-619 and Ser-632. Thr-649 carries the phosphothreonine modification. Ser-692 is subject to Phosphoserine.

This sequence belongs to the protein kinase superfamily. Ser/Thr protein kinase family.

The protein localises to the cell membrane. It catalyses the reaction L-seryl-[protein] + ATP = O-phospho-L-seryl-[protein] + ADP + H(+). The catalysed reaction is L-threonyl-[protein] + ATP = O-phospho-L-threonyl-[protein] + ADP + H(+). This chain is G-type lectin S-receptor-like serine/threonine-protein kinase At1g61490, found in Arabidopsis thaliana (Mouse-ear cress).